A 550-amino-acid chain; its full sequence is Homeobox and leucine zipper protein Homez (550 aa).

Residues 1 to 10 (MVRGWEPPPG) show a composition bias toward pro residues. Residues 1–36 (MVRGWEPPPGLDCAISEGHKSEGTMPPNKEASGLSS) form a disordered region. Residues 55–114 (WTQAAQTSELDSNEHLLKTFSYFPYPSLADIALLCLRYGLQMEKVKTWFMAQRLRCGISW) constitute a DNA-binding region (homeobox 1). Residues 168 to 199 (GPPTLSKPTQTKGLKVEPEEPSQMPPLPQSHQ) form a disordered region. Glycyl lysine isopeptide (Lys-Gly) (interchain with G-Cter in SUMO2) cross-links involve residues Lys-182, Lys-200, and Lys-202. The segment at 223 to 265 (LQSSGLSKEQAGRGPNQSHGIGTASWNHSTTVPQPQARDKPPP) is disordered. The segment covering 237–256 (PNQSHGIGTASWNHSTTVPQ) has biased composition (polar residues). Ser-351 bears the Phosphoserine mark. DNA-binding regions (homeobox) lie at residues 355-415 (QRQR…KHGQ) and 451-510 (TPPL…AEVV). The Nuclear localization signal motif lies at 358–363 (RKTKRK). Disordered regions lie at residues 424 to 465 (VPGA…DIQP) and 512 to 550 (CLDE…IIQD). The residue at position 451 (Thr-451) is a Phosphothreonine. Positions 452–463 (PPLPIPPPPPDI) are enriched in pro residues. Over residues 513-550 (LDEEEEEEEEELPEDDEEEEEEEEEDDDDDDDDVIIQD) the composition is skewed to acidic residues.

In terms of assembly, homodimer or heterodimer (Potential). Interacts with HOXC8. Ubiquitous. Strongly expressed in adult testis and kidney as well as fetal lung and kidney.

Its subcellular location is the nucleus. In terms of biological role, may function as a transcriptional regulator. The polypeptide is Homeobox and leucine zipper protein Homez (HOMEZ) (Homo sapiens (Human)).